The following is a 419-amino-acid chain: Cyclin-B2-2 (419 aa).

Residues 79-116 (QPSSAPLAPIGSERQKRTADSAFHGPADMECTKITSDD) form a disordered region.

This sequence belongs to the cyclin family. Cyclin AB subfamily. Interacts with CDKB2-1. In terms of tissue distribution, expressed in the intercalary meristem and the elongation zone of internodes. Expressed in adventitious roots at all nodes under submergence conditions.

The protein resides in the nucleus. Its function is as follows. Involved in the control of the cell cycle at the G2/M (mitosis) transition. May associate to CDKB2-1 and activate CDKB2-1 kinase to promote cell division. In Oryza sativa subsp. indica (Rice), this protein is Cyclin-B2-2 (CYCB2-2).